The following is a 561-amino-acid chain: Developmental and secondary metabolism regulator veA (561 aa).

3 disordered regions span residues 1-23 (MANR…RITR), 41-60 (ARAC…VDPP), and 258-361 (AYAR…PQGI). The span at 12–23 (NETEHSVSRITR) shows a compositional bias: basic and acidic residues. The region spanning 25–233 (GKQLTYKLSV…AEQGCRVRIR (209 aa)) is the Velvet domain. Positions 39–44 (ERARAC) match the Nuclear localization signal motif. Basic and acidic residues predominate over residues 258–268 (AYARSSDRFTT). Polar residues predominate over residues 324–339 (SHSQTPSYQSHLSFGS). The segment covering 347 to 357 (PHMPPTPPPVA) has biased composition (pro residues). The segment at 438–485 (RPQTPNLPAMPPPKPLSNDYANHVVPSVECTSPGGSGGGGYDNVRGKR) is PEST. The interval 491-524 (GPTYGKRSHEDTFGLDDRSMQNGMRPDTEPYPAY) is disordered. Positions 497–509 (RSHEDTFGLDDRS) are enriched in basic and acidic residues.

This sequence belongs to the velvet family. VeA subfamily. Component of the heterotrimeric velvet complex composed of laeA, veA and velB; velA acting as a bridging protein between laeA and velB. Interacts with kapA. Interacts with vosA and velc.

The protein localises to the nucleus. The protein resides in the cytoplasm. Its function is as follows. Component of the velvet transcription factor complex that controls sexual/asexual developmental ratio in response to light, promoting sexual development in the darkness while stimulating asexual sporulation under illumination. The velvet complex acts as a global regulator for secondary metabolite gene expression. Controls the expression of the penicillin gene cluster. Positively controls the expression of the class V chitinase chiB1. Positively controls the expression of the transcription factor atfA. Required for cell wall integrity and controls hyphal branching. The sequence is that of Developmental and secondary metabolism regulator veA from Penicillium rubens (strain ATCC 28089 / DSM 1075 / NRRL 1951 / Wisconsin 54-1255) (Penicillium chrysogenum).